The primary structure comprises 336 residues: Anthranilate phosphoribosyltransferase (336 aa).

Residues Gly79, 82–83 (GD), Thr87, 89–92 (NIST), 107–115 (KHGNRAMSS), and Ser119 each bind 5-phospho-alpha-D-ribose 1-diphosphate. Gly79 lines the anthranilate pocket. Residue Ser91 participates in Mg(2+) binding. Asn110 is an anthranilate binding site. Arg165 is a binding site for anthranilate. Asp225 and Glu226 together coordinate Mg(2+).

It belongs to the anthranilate phosphoribosyltransferase family. In terms of assembly, homodimer. Requires Mg(2+) as cofactor.

The enzyme catalyses N-(5-phospho-beta-D-ribosyl)anthranilate + diphosphate = 5-phospho-alpha-D-ribose 1-diphosphate + anthranilate. It participates in amino-acid biosynthesis; L-tryptophan biosynthesis; L-tryptophan from chorismate: step 2/5. Catalyzes the transfer of the phosphoribosyl group of 5-phosphorylribose-1-pyrophosphate (PRPP) to anthranilate to yield N-(5'-phosphoribosyl)-anthranilate (PRA). This Dictyoglomus thermophilum (strain ATCC 35947 / DSM 3960 / H-6-12) protein is Anthranilate phosphoribosyltransferase.